Reading from the N-terminus, the 308-residue chain is Cytochrome c biogenesis protein CcsA (308 aa).

7 helical membrane-spanning segments follow: residues 17–37 (IISI…VGLC), 43–63 (GMIT…IYSG), 70–90 (LYES…VPYF), 142–162 (MLLS…LLVI), 213–233 (VIGL…VWAN), 246–260 (ETWA…AIYL), and 274–294 (AIVA…VNLL).

It belongs to the CcmF/CycK/Ccl1/NrfE/CcsA family. May interact with Ccs1.

It localises to the plastid. Its subcellular location is the chloroplast thylakoid membrane. In terms of biological role, required during biogenesis of c-type cytochromes (cytochrome c6 and cytochrome f) at the step of heme attachment. The sequence is that of Cytochrome c biogenesis protein CcsA from Nymphaea alba (White water-lily).